The sequence spans 610 residues: Atypical kinase COQ8, mitochondrial (610 aa).

Residues 98–111 (GVKHLQEQSSKEIK) are compositionally biased toward basic and acidic residues. Residues 98-144 (GVKHLQEQSSKEIKNPISQPILPNKKDEISPAKPSAIDSSIKDVTKS) form a disordered region.

The protein belongs to the protein kinase superfamily. ADCK protein kinase family.

It localises to the mitochondrion. The protein operates within cofactor biosynthesis; ubiquinone biosynthesis. Atypical kinase involved in the biosynthesis of coenzyme Q, also named ubiquinone, an essential lipid-soluble electron transporter for aerobic cellular respiration. Its substrate specificity is still unclear: may act as a protein kinase that mediates phosphorylation of coq3. According to other reports, acts as a small molecule kinase, possibly a lipid kinase that phosphorylates a prenyl lipid in the ubiquinone biosynthesis pathway, as suggested by its ability to bind coenzyme Q lipid intermediates. The sequence is that of Atypical kinase COQ8, mitochondrial from Schizosaccharomyces pombe (strain 972 / ATCC 24843) (Fission yeast).